The chain runs to 74 residues: Translation initiation factor IF-1, chloroplastic (74 aa).

The 72-residue stretch at 1 to 72 folds into the S1-like domain; sequence MEKQNIIEME…TKGRITYRLR (72 aa).

This sequence belongs to the IF-1 family. As to quaternary structure, component of the 30S ribosomal translation pre-initiation complex which assembles on the 30S ribosome in the order IF-2 and IF-3, IF-1 and N-formylmethionyl-tRNA(fMet); mRNA recruitment can occur at any time during PIC assembly.

Its subcellular location is the plastid. It localises to the chloroplast. One of the essential components for the initiation of protein synthesis. Stabilizes the binding of IF-2 and IF-3 on the 30S subunit to which N-formylmethionyl-tRNA(fMet) subsequently binds. Helps modulate mRNA selection, yielding the 30S pre-initiation complex (PIC). Upon addition of the 50S ribosomal subunit IF-1, IF-2 and IF-3 are released leaving the mature 70S translation initiation complex. This chain is Translation initiation factor IF-1, chloroplastic, found in Chlorokybus atmophyticus (Soil alga).